The sequence spans 306 residues: MNKNDILRGLESILPKDIIKVDEPLKRYTYTETGGEADFYLSPTKNEEVQAIVKFAHENSIPVTYLGNGSNIIIREGGIRGIVLSLLSLNHIETSDDAIIAGSGAAIIDVSNVARDHVLTGLEFACGIPGSIGGAVFMNAGAYGGEVKDCIDYALCVNEKGDLLKLTTAELELDYRNSVVQQKHLVVLEAAFTLEPGKLDEIQAKMDDLTERRESKQPLEFPSCGSVFQRPPGHFAGKLIQDSNLQGYRIGGVEVSTKHAGFMVNVDNGTATDYEALIHHVQKIVKEKFDVELNTEVRIIGDHPTD.

The 165-residue stretch at 33-197 folds into the FAD-binding PCMH-type domain; sequence TGGEADFYLS…LEAAFTLEPG (165 aa). Arg-176 is a catalytic residue. The active-site Proton donor is the Ser-226. The active site involves Glu-296.

It belongs to the MurB family. FAD serves as cofactor.

It localises to the cytoplasm. It catalyses the reaction UDP-N-acetyl-alpha-D-muramate + NADP(+) = UDP-N-acetyl-3-O-(1-carboxyvinyl)-alpha-D-glucosamine + NADPH + H(+). It participates in cell wall biogenesis; peptidoglycan biosynthesis. Functionally, cell wall formation. This is UDP-N-acetylenolpyruvoylglucosamine reductase from Staphylococcus epidermidis (strain ATCC 35984 / DSM 28319 / BCRC 17069 / CCUG 31568 / BM 3577 / RP62A).